A 156-amino-acid chain; its full sequence is Small ribosomal subunit protein uS7 (156 aa).

The protein belongs to the universal ribosomal protein uS7 family. As to quaternary structure, part of the 30S ribosomal subunit. Contacts proteins S9 and S11.

In terms of biological role, one of the primary rRNA binding proteins, it binds directly to 16S rRNA where it nucleates assembly of the head domain of the 30S subunit. Is located at the subunit interface close to the decoding center, probably blocks exit of the E-site tRNA. This chain is Small ribosomal subunit protein uS7, found in Clostridium acetobutylicum (strain ATCC 824 / DSM 792 / JCM 1419 / IAM 19013 / LMG 5710 / NBRC 13948 / NRRL B-527 / VKM B-1787 / 2291 / W).